A 148-amino-acid polypeptide reads, in one-letter code: Deoxyuridine 5'-triphosphate nucleotidohydrolase (148 aa).

Substrate contacts are provided by residues 68–70 (RSG), Asn-81, 85–87 (TID), and Lys-95.

The protein belongs to the dUTPase family. The cofactor is Mg(2+).

It carries out the reaction dUTP + H2O = dUMP + diphosphate + H(+). The protein operates within pyrimidine metabolism; dUMP biosynthesis; dUMP from dCTP (dUTP route): step 2/2. Functionally, this enzyme is involved in nucleotide metabolism: it produces dUMP, the immediate precursor of thymidine nucleotides and it decreases the intracellular concentration of dUTP so that uracil cannot be incorporated into DNA. In Rickettsia typhi (strain ATCC VR-144 / Wilmington), this protein is Deoxyuridine 5'-triphosphate nucleotidohydrolase.